We begin with the raw amino-acid sequence, 174 residues long: Gamma-crystallin C (174 aa).

2 consecutive Beta/gamma crystallin 'Greek key' domains span residues glycine 2–serine 40 and glycine 41–serine 83. Cysteine 23 is modified (S-methylcysteine). The segment at aspartate 84–serine 87 is connecting peptide. Beta/gamma crystallin 'Greek key' domains follow at residues histidine 88–glutamate 128 and glycine 129–valine 171.

Belongs to the beta/gamma-crystallin family.

In terms of biological role, crystallins are the dominant structural components of the vertebrate eye lens. This Bos taurus (Bovine) protein is Gamma-crystallin C (CRYGC).